A 348-amino-acid chain; its full sequence is Dihydroorotase (348 aa).

Zn(2+)-binding residues include histidine 17 and histidine 19. Residues 19-21 (HLR) and asparagine 45 contribute to the substrate site. Zn(2+) is bound by residues lysine 103, histidine 140, and histidine 178. Lysine 103 carries the N6-carboxylysine modification. Histidine 140 serves as a coordination point for substrate. Leucine 223 lines the substrate pocket. Aspartate 251 provides a ligand contact to Zn(2+). The active site involves aspartate 251. Positions 255 and 267 each coordinate substrate.

This sequence belongs to the metallo-dependent hydrolases superfamily. DHOase family. Class II DHOase subfamily. In terms of assembly, homodimer. Zn(2+) serves as cofactor.

The enzyme catalyses (S)-dihydroorotate + H2O = N-carbamoyl-L-aspartate + H(+). It functions in the pathway pyrimidine metabolism; UMP biosynthesis via de novo pathway; (S)-dihydroorotate from bicarbonate: step 3/3. Catalyzes the reversible cyclization of carbamoyl aspartate to dihydroorotate. This chain is Dihydroorotase, found in Salmonella dublin (strain CT_02021853).